Reading from the N-terminus, the 35-residue chain is Coatomer subunit alpha (35 aa).

In terms of assembly, oligomeric complex that consists of at least the alpha, beta, beta', gamma, delta, epsilon and zeta subunits. Interacts with SCYL1. Interacts with JAGN1. Interacts with TMEM41B. Interacts with SVEP1. Probably interacts with PEX11A. In terms of tissue distribution, gastric, duodenal and jejunal mucosa. Circulates in the blood. Seems to be confined to specific endocrine cells.

Functionally, xenin stimulates exocrine pancreatic secretion. It inhibits pentagastrin-stimulated secretion of acid, to induce exocrine pancreatic secretion and to affect small and large intestinal motility. In the gut, xenin interacts with the neurotensin receptor. The protein is Coatomer subunit alpha (COPA) of Canis lupus familiaris (Dog).